We begin with the raw amino-acid sequence, 1444 residues long: Probable chitinase LysM18 (1444 aa).

2 consecutive LysM domains span residues 256 to 302 (STVQ…HFCC) and 321 to 369 (TTYT…IICL). Residues 382–450 (NAECGPQVPG…TNGCISNCGT (69 aa)) form the Chitin-binding type-1 domain. Disulfide bonds link C385–C413, C407–C419, C412–C426, and C444–C448. The GH18 domain maps to 461 to 831 (YRKVGFYEGF…STSWTKFTSD (371 aa)). E582 serves as the catalytic Proton donor. Y583 and W808 together coordinate chitin.

Belongs to the glycosyl hydrolase 18 family. Chitinase class V subfamily.

The enzyme catalyses Random endo-hydrolysis of N-acetyl-beta-D-glucosaminide (1-&gt;4)-beta-linkages in chitin and chitodextrins.. In terms of biological role, probable chitinase involved in the degradation of chitin, a component of the cell walls of fungi and exoskeletal elements of some animals (including worms and arthropods). Might be involved in manipulation of host defenses for successful infection. The sequence is that of Probable chitinase LysM18 from Penicillium expansum (Blue mold rot fungus).